We begin with the raw amino-acid sequence, 491 residues long: Nicotinamide phosphoribosyltransferase (491 aa).

Residue methionine 1 is modified to N-acetylmethionine. Phosphotyrosine is present on tyrosine 188. Arginine 196 lines the diphosphate pocket. A beta-nicotinamide D-ribonucleotide-binding site is contributed by aspartate 219. 2 residues coordinate diphosphate: histidine 247 and arginine 311. Residues 311 to 313, 353 to 354, glycine 384, and arginine 392 contribute to the beta-nicotinamide D-ribonucleotide site; these read RPD and GD. Serine 472 is modified (phosphoserine).

This sequence belongs to the NAPRTase family. In terms of assembly, homodimer. As to expression, expressed in various tissues. At the highest level in liver and at the second highest in heart. The amount is higher in heart than in lung.

Its subcellular location is the nucleus. It localises to the cytoplasm. It is found in the secreted. The catalysed reaction is beta-nicotinamide D-ribonucleotide + diphosphate = 5-phospho-alpha-D-ribose 1-diphosphate + nicotinamide + H(+). Its pathway is cofactor biosynthesis; NAD(+) biosynthesis; nicotinamide D-ribonucleotide from 5-phospho-alpha-D-ribose 1-diphosphate and nicotinamide: step 1/1. Functionally, catalyzes the condensation of nicotinamide with 5-phosphoribosyl-1-pyrophosphate to yield nicotinamide mononucleotide, an intermediate in the biosynthesis of NAD. It is the rate limiting component in the mammalian NAD biosynthesis pathway. The secreted form behaves both as a cytokine with immunomodulating properties and an adipokine with anti-diabetic properties, it has no enzymatic activity, partly because of lack of activation by ATP, which has a low level in extracellular space and plasma. Plays a role in the modulation of circadian clock function. NAMPT-dependent oscillatory production of NAD regulates oscillation of clock target gene expression by releasing the core clock component: CLOCK-BMAL1 heterodimer from NAD-dependent SIRT1-mediated suppression. This chain is Nicotinamide phosphoribosyltransferase (Nampt), found in Rattus norvegicus (Rat).